A 647-amino-acid chain; its full sequence is Phosphomethylpyrimidine synthase (647 aa).

Substrate-binding positions include Asn-235, Met-264, Tyr-293, His-329, 349–351 (SRG), 390–393 (DGLR), and Glu-429. A Zn(2+)-binding site is contributed by His-433. Position 456 (Tyr-456) interacts with substrate. His-497 contacts Zn(2+). Residues Cys-577, Cys-580, and Cys-585 each contribute to the [4Fe-4S] cluster site. The disordered stretch occupies residues 623 to 647 (KSAEFKASGSELYHPAVSHEEVAEG).

Belongs to the ThiC family. In terms of assembly, homodimer. It depends on [4Fe-4S] cluster as a cofactor.

It carries out the reaction 5-amino-1-(5-phospho-beta-D-ribosyl)imidazole + S-adenosyl-L-methionine = 4-amino-2-methyl-5-(phosphooxymethyl)pyrimidine + CO + 5'-deoxyadenosine + formate + L-methionine + 3 H(+). Its pathway is cofactor biosynthesis; thiamine diphosphate biosynthesis. In terms of biological role, catalyzes the synthesis of the hydroxymethylpyrimidine phosphate (HMP-P) moiety of thiamine from aminoimidazole ribotide (AIR) in a radical S-adenosyl-L-methionine (SAM)-dependent reaction. In Vibrio vulnificus (strain CMCP6), this protein is Phosphomethylpyrimidine synthase.